The following is a 327-amino-acid chain: Deaminated glutathione amidase (327 aa).

The transit peptide at 1–36 (MLGFITRPPHQLLSLLCTGYRLPQISVLCTQPRPRA) directs the protein to the mitochondrion. In terms of domain architecture, CN hydrolase spans 47–299 (LPLVAVCQVT…PGLCLARIDL (253 aa)). E87 acts as the Proton acceptor in catalysis. Catalysis depends on K162, which acts as the Proton donor. C204 serves as the catalytic Nucleophile.

It belongs to the carbon-nitrogen hydrolase superfamily. NIT1/NIT2 family.

It localises to the mitochondrion. Its subcellular location is the cytoplasm. The catalysed reaction is N-(4-oxoglutaryl)-L-cysteinylglycine + H2O = L-cysteinylglycine + 2-oxoglutarate. Its function is as follows. Catalyzes the hydrolysis of the amide bond in N-(4-oxoglutarate)-L-cysteinylglycine (deaminated glutathione), a metabolite repair reaction to dispose of the harmful deaminated glutathione. Plays a role in cell growth and apoptosis: loss of expression promotes cell growth, resistance to DNA damage stress and increased incidence to NMBA-induced tumors. Has tumor suppressor properties that enhances the apoptotic responsiveness in cancer cells; this effect is additive to the tumor suppressor activity of FHIT. It is also a negative regulator of primary T-cells. The polypeptide is Deaminated glutathione amidase (Nit1) (Rattus norvegicus (Rat)).